A 357-amino-acid chain; its full sequence is Protein Wnt-9b (357 aa).

The N-terminal stretch at 1 to 22 (MRPPPALALAGLCLLALPAAAA) is a signal peptide. 11 cysteine pairs are disulfide-bonded: C89–C100, C135–C143, C145–C162, C210–C224, C212–C219, C291–C316, C305–C311, C315–C355, C331–C346, C333–C343, and C338–C339. N99 carries an N-linked (GlcNAc...) asparagine glycan. S216 carries the O-palmitoleoyl serine; by PORCN lipid modification.

Belongs to the Wnt family. Forms a soluble 1:1 complex with AFM; this prevents oligomerization and is required for prolonged biological activity. The complex with AFM may represent the physiological form in body fluids. Component of the Wnt-Fzd-LRP5-LRP6 signaling complex that contains a WNT protein, a FZD protein and LRP5 or LRP6. Interacts directly in the complex with LRP6. Interacts with PKD1 (via extracellular domain). Palmitoleoylation is required for efficient binding to frizzled receptors. Depalmitoleoylation leads to Wnt signaling pathway inhibition. In terms of tissue distribution, moderately expressed in fetal kidney and adult kidney. Also found in brain.

It localises to the secreted. Its subcellular location is the extracellular space. The protein localises to the extracellular matrix. Ligand for members of the frizzled family of seven transmembrane receptors. Functions in the canonical Wnt/beta-catenin signaling pathway. Required for normal embryonic kidney development, and for normal development of the urogenital tract, including uterus and part of the oviduct and the upper vagina in females, and epididymis and vas deferens in males. Activates a signaling cascade in the metanephric mesenchyme that induces tubulogenesis. Acts upstream of WNT4 in the signaling pathways that mediate development of kidney tubules and the Muellerian ducts. Plays a role in cranofacial development and is required for normal fusion of the palate during embryonic development. The chain is Protein Wnt-9b (WNT9B) from Homo sapiens (Human).